Reading from the N-terminus, the 559-residue chain is Potassium-transporting ATPase potassium-binding subunit (559 aa).

The next 12 helical transmembrane spans lie at 7 to 27 (LLIA…GSGL), 63 to 83 (LLAL…LLFW), 132 to 152 (GLTV…FALI), 170 to 190 (LVRI…LFFI), 253 to 273 (MVQM…FGEA), 283 to 303 (LLWA…WAEV), 327 to 347 (FGVL…CGAV), 356 to 376 (ALGG…FGGV), 379 to 399 (GLYG…LMIG), 416 to 436 (MTAL…ALAM), 484 to 504 (LLAF…MAIA), and 524 to 544 (GALF…LTFI).

This sequence belongs to the KdpA family. The system is composed of three essential subunits: KdpA, KdpB and KdpC.

The protein localises to the cell inner membrane. In terms of biological role, part of the high-affinity ATP-driven potassium transport (or Kdp) system, which catalyzes the hydrolysis of ATP coupled with the electrogenic transport of potassium into the cytoplasm. This subunit binds the periplasmic potassium ions and delivers the ions to the membrane domain of KdpB through an intramembrane tunnel. The polypeptide is Potassium-transporting ATPase potassium-binding subunit (Salmonella arizonae (strain ATCC BAA-731 / CDC346-86 / RSK2980)).